A 326-amino-acid chain; its full sequence is MPHSVSAFQAAYIGIEVLIALVSVPGNVLVIWAVKVNQALRDATFCFIASLAVADVAVGALVIPLAILINIGPQTYFHTCLMVACPVLILTQSSILALLAIAVDRYLRVKIPLRYKTVVTPRRAAVAIAGCWILSLVVGLTPMFGWNNLSKIEMAWAANGSVGEPVIKCEFEKVISMEYMVYFNFFVWVLPPLLLMVLIYLEVFYLIRKQLSKKVSASSGDPQKYYGKELKIAKSLALILFLFALSWLPLHILNCITLFCPTCHKPTILTYIAIFLTHGNSAMNPIVYAFRIQKFRVTFLKIWNDHFRCQPEPPIDEDLPEEKVDD.

The Extracellular segment spans residues 1–10 (MPHSVSAFQA). The helical transmembrane segment at 11 to 33 (AYIGIEVLIALVSVPGNVLVIWA) threads the bilayer. Topologically, residues 34–46 (VKVNQALRDATFC) are cytoplasmic. Residues 47 to 69 (FIASLAVADVAVGALVIPLAILI) form a helical membrane-spanning segment. Over 70–80 (NIGPQTYFHTC) the chain is Extracellular. Cys80 and Cys169 are disulfide-bonded. Residues 81-102 (LMVACPVLILTQSSILALLAIA) traverse the membrane as a helical segment. Residues 103-123 (VDRYLRVKIPLRYKTVVTPRR) lie on the Cytoplasmic side of the membrane. Residues 124 to 146 (AAVAIAGCWILSLVVGLTPMFGW) traverse the membrane as a helical segment. At 147–176 (NNLSKIEMAWAANGSVGEPVIKCEFEKVIS) the chain is on the extracellular side. Asn159 carries N-linked (GlcNAc...) asparagine glycosylation. The helical transmembrane segment at 177 to 201 (MEYMVYFNFFVWVLPPLLLMVLIYL) threads the bilayer. At 202–235 (EVFYLIRKQLSKKVSASSGDPQKYYGKELKIAKS) the chain is on the cytoplasmic side. Residues 236-259 (LALILFLFALSWLPLHILNCITLF) traverse the membrane as a helical segment. The Extracellular portion of the chain corresponds to 260–267 (CPTCHKPT). The chain crosses the membrane as a helical span at residues 268–292 (ILTYIAIFLTHGNSAMNPIVYAFRI). At 293–326 (QKFRVTFLKIWNDHFRCQPEPPIDEDLPEEKVDD) the chain is on the cytoplasmic side. A lipid anchor (S-palmitoyl cysteine) is attached at Cys309.

It belongs to the G-protein coupled receptor 1 family.

It is found in the cell membrane. Receptor for adenosine. The activity of this receptor is mediated by G proteins which inhibit adenylyl cyclase. This Cavia porcellus (Guinea pig) protein is Adenosine receptor A1 (ADORA1).